A 394-amino-acid polypeptide reads, in one-letter code: Xylose isomerase (394 aa).

Residues histidine 54 and aspartate 57 contribute to the active site. Residues glutamate 180, glutamate 216, histidine 219, aspartate 244, aspartate 254, aspartate 256, and aspartate 285 each coordinate Mg(2+). The segment at 370–394 (VRTPRPAGDGPPAGRARLTVAPRKR) is disordered. The span at 373–386 (PRPAGDGPPAGRAR) shows a compositional bias: low complexity.

It belongs to the xylose isomerase family. Homotetramer. It depends on Mg(2+) as a cofactor.

The protein resides in the cytoplasm. The catalysed reaction is alpha-D-xylose = alpha-D-xylulofuranose. Involved in D-xylose catabolism. The protein is Xylose isomerase (xylA) of Streptomyces rochei (Streptomyces parvullus).